Here is a 720-residue protein sequence, read N- to C-terminus: MGSTSQEILKSFCFNTDWDYAVFWQLNHRGSRMVLTLEDAYYDHHGTNMHGAHDPLGLAVAKMSYHVYSLGEGIVGQVAVSGEHQWVFPENYNNCNSAFEFHNVWESQISAGIKTILVVAVGPCGVVQLGSLCKVNEDVNFVNHIRHLFLALRDPLADHAANLRQCNMNNSLCLPKMPSEGLHAEAFPDCSGEVDKAMDVEESNILTQYKTRRSDSMPYNTPSSCLVMEKAAQVVGGREVVQGSTCGSYSGVTFGFPVDLVGAKHENQVGTNIIRDAPHVGMTSGCKDSRDLDPNLHLYMKNHVLNDTSTSALAIEAERLITSQSYPRLDSTFQATSRTDKESSYHNEVFQLSENQGNKYIKETERMLGRNCESSQFDALISSGYTFAGSELLEALGSAFKQTNTGQEELLKSEHGSTMRPTDDMSHSQLTFDPGPENLLDAVVANVCQRDGNARDDMMSSRSVQSLLTNMELAEPSGQKKHNIVNPINSAMNQPPMAEVDTQQNSSDICGAFSSIGFSSTYPSSSSDQFQTSLDIPKKNKKRAKPGESSRPRPRDRQLIQDRIKELRELVPNGSKCSIDSLLERTIKHMLFLQNVTKHAEKLSKSANEKMQQKETGMQGSSCAVEVGGHLQVSSIIVENLNKQGMVLIEMLCEECGHFLEIANVIRSLDLVILRGFTETQGEKTWICFVTESQNSKVMQRMDILWSLVQIFQPKANEKG.

Over residues 522-534 the composition is skewed to polar residues; that stretch reads YPSSSSDQFQTSL. A disordered region spans residues 522–558; sequence YPSSSSDQFQTSLDIPKKNKKRAKPGESSRPRPRDRQ. Positions 540 to 547 match the Nuclear localization signal motif; sequence NKKRAKPG. A bHLH domain is found at 544-593; that stretch reads AKPGESSRPRPRDRQLIQDRIKELRELVPNGSKCSIDSLLERTIKHMLFL. Residues 545–558 are compositionally biased toward basic and acidic residues; the sequence is KPGESSRPRPRDRQ.

Belongs to the bHLH protein family. LHW subfamily. In terms of assembly, homodimer.

Its subcellular location is the nucleus. Transcription factor that may regulate root development. The polypeptide is Transcription factor bHLH155 (BHLH155) (Arabidopsis thaliana (Mouse-ear cress)).